An 86-amino-acid chain; its full sequence is Small ribosomal subunit protein bS16 (86 aa).

Belongs to the bacterial ribosomal protein bS16 family.

This chain is Small ribosomal subunit protein bS16, found in Thermoanaerobacter pseudethanolicus (strain ATCC 33223 / 39E) (Clostridium thermohydrosulfuricum).